The sequence spans 207 residues: Large ribosomal subunit protein uL3 (207 aa).

Belongs to the universal ribosomal protein uL3 family. As to quaternary structure, part of the 50S ribosomal subunit. Forms a cluster with proteins L14 and L19.

Its function is as follows. One of the primary rRNA binding proteins, it binds directly near the 3'-end of the 23S rRNA, where it nucleates assembly of the 50S subunit. The chain is Large ribosomal subunit protein uL3 from Fervidobacterium nodosum (strain ATCC 35602 / DSM 5306 / Rt17-B1).